A 460-amino-acid chain; its full sequence is Lipase member I (460 aa).

The N-terminal stretch at 1–15 (MRVYIFLCLMCWVRS) is a signal peptide. Residue asparagine 63 is glycosylated (N-linked (GlcNAc...) asparagine). Serine 159 serves as the catalytic Nucleophile. Aspartate 183 functions as the Charge relay system in the catalytic mechanism. The cysteines at positions 238 and 251 are disulfide-linked. Histidine 253 serves as the catalytic Charge relay system. Cystine bridges form between cysteine 275/cysteine 286 and cysteine 289/cysteine 297. N-linked (GlcNAc...) asparagine glycosylation is present at asparagine 396. A disulfide bridge connects residues cysteine 436 and cysteine 455.

This sequence belongs to the AB hydrolase superfamily. Lipase family. Interacts with heparin with a high affinity. In terms of tissue distribution, expressed in testis. Expressed exclusively at the connecting piece of the sperm.

Its subcellular location is the cell membrane. It localises to the secreted. It catalyses the reaction 1-hexadecanoyl-2-(9Z-octadecenoyl)-sn-glycero-3-phosphate + H2O = 2-(9Z-octadecenoyl)-sn-glycero-3-phosphate + hexadecanoate + H(+). Inhibited by sodium vanadate. In terms of biological role, hydrolyzes specifically phosphatidic acid (PA) to produce 2-acyl lysophosphatidic acid (LPA; a potent bioactive lipid mediator) and fatty acid. Does not hydrolyze other phospholipids, like phosphatidylserine (PS), phosphatidylcholine (PC) and phosphatidylethanolamine (PE) or triacylglycerol (TG). The sequence is that of Lipase member I (LIPI) from Homo sapiens (Human).